A 1591-amino-acid polypeptide reads, in one-letter code: Dicer-like protein 1 (1591 aa).

2 stretches are compositionally biased toward basic and acidic residues: residues 1-20 and 41-52; these read MEVH…RYDD and SKPRKISERKRA. The interval 1–52 is disordered; sequence MEVHDGLKSPDKAAKSRYDDDRIDQDSEDEAVRLVANPDPSKPRKISERKRA. Residues 115-298 form the Helicase ATP-binding domain; that stretch reads LFERAKQKNT…SYERATHELE (184 aa). 128 to 135 serves as a coordination point for ATP; it reads LDTGTGKT. The DEAH box signature appears at 242 to 245; sequence DEAH. Positions 439–607 constitute a Helicase C-terminal domain; the sequence is KLIEILAECF…CLSLPKDRIM (169 aa). In terms of domain architecture, Dicer dsRNA-binding fold spans 639–729; the sequence is SLVVLAEFVA…KSTLAKVLPA (91 aa). Residues 888 to 1012 enclose the PAZ domain; the sequence is TTTDRVPYNF…LVLETLLISQ (125 aa). 2 consecutive RNase III domains span residues 1050 to 1190 and 1243 to 1406; these read IDIA…LTAQ and CSQI…VDTG. Mg(2+)-binding residues include Glu1283, Asp1392, and Glu1395. In terms of domain architecture, DRBM spans 1440 to 1514; sequence THITSIITTQ…AKQAVAIYED (75 aa). Residues Cys1452, His1485, Cys1526, and Cys1528 each contribute to the Zn(2+) site.

Belongs to the helicase family. Dicer subfamily. Requires Mg(2+) as cofactor. The cofactor is Mn(2+).

Functionally, dicer-like endonuclease which seems not to be involved in cleaving double-stranded RNA in the RNA interference (RNAi) pathway, contrary to its DCL2 counterpart. The sequence is that of Dicer-like protein 1 (DCL1) from Pyricularia oryzae (strain 70-15 / ATCC MYA-4617 / FGSC 8958) (Rice blast fungus).